A 660-amino-acid polypeptide reads, in one-letter code: Iron(3+)-hydroxamate import system permease protein FhuB (660 aa).

Transmembrane regions (helical) follow at residues 5–25 (IALF…ALTW), 62–82 (LAIS…FQQV), 93–113 (LGVA…AIPG), 118–138 (QFAA…VAWG), 147–167 (ILAG…LVIF), 197–217 (QLLG…LMGL), 240–260 (AIVI…IGLF), 277–297 (LMLA…IILW), 303–323 (MEVS…LWLL), 348–368 (LAFA…ALSF), 391–411 (WPRI…GCII), 424–444 (VLGI…LVPG), 447–467 (FGWL…IIMI), 479–499 (MLLA…MLQA), 528–548 (GIVM…LTIL), 567–587 (IALL…IGPL), 607–627 (MPHI…ADWC), and 635–655 (FQIP…IYLL).

This sequence belongs to the binding-protein-dependent transport system permease family. FecCD subfamily. As to quaternary structure, the complex is composed of two ATP-binding proteins (FhuC), a transmembrane protein (FhuB) and a solute-binding protein (FhuD). FhuB interacts with FhuC. FhuB interacts with FhuD. FhuB binds substrate-loaded FhuD more strongly than FhuD alone.

The protein resides in the cell inner membrane. In terms of biological role, part of the ABC transporter complex FhuCDB involved in iron(3+)-hydroxamate import. Responsible for the translocation of the substrate across the membrane. The protein is Iron(3+)-hydroxamate import system permease protein FhuB (fhuB) of Escherichia coli (strain K12).